A 173-amino-acid polypeptide reads, in one-letter code: Crossover junction endodeoxyribonuclease RuvC (173 aa).

Active-site residues include Asp8, Glu67, and Asp139. Asp8, Glu67, and Asp139 together coordinate Mg(2+).

This sequence belongs to the RuvC family. As to quaternary structure, homodimer which binds Holliday junction (HJ) DNA. The HJ becomes 2-fold symmetrical on binding to RuvC with unstacked arms; it has a different conformation from HJ DNA in complex with RuvA. In the full resolvosome a probable DNA-RuvA(4)-RuvB(12)-RuvC(2) complex forms which resolves the HJ. Requires Mg(2+) as cofactor.

Its subcellular location is the cytoplasm. It catalyses the reaction Endonucleolytic cleavage at a junction such as a reciprocal single-stranded crossover between two homologous DNA duplexes (Holliday junction).. Functionally, the RuvA-RuvB-RuvC complex processes Holliday junction (HJ) DNA during genetic recombination and DNA repair. Endonuclease that resolves HJ intermediates. Cleaves cruciform DNA by making single-stranded nicks across the HJ at symmetrical positions within the homologous arms, yielding a 5'-phosphate and a 3'-hydroxyl group; requires a central core of homology in the junction. The consensus cleavage sequence is 5'-(A/T)TT(C/G)-3'. Cleavage occurs on the 3'-side of the TT dinucleotide at the point of strand exchange. HJ branch migration catalyzed by RuvA-RuvB allows RuvC to scan DNA until it finds its consensus sequence, where it cleaves and resolves the cruciform DNA. This chain is Crossover junction endodeoxyribonuclease RuvC, found in Shewanella frigidimarina (strain NCIMB 400).